A 345-amino-acid polypeptide reads, in one-letter code: D-fructose 1,6-bisphosphatase class 2/sedoheptulose 1,7-bisphosphatase (345 aa).

Mn(2+) is bound by residues aspartate 33, glutamate 57, aspartate 97, and glutamate 100. Residues 100–102, tyrosine 131, 176–178, and 198–200 contribute to the substrate site; these read EGT, RPR, and DGD. Glutamate 225 contacts Mn(2+).

The protein belongs to the FBPase class 2 family. As to quaternary structure, homotetramer. Mn(2+) is required as a cofactor.

It catalyses the reaction beta-D-fructose 1,6-bisphosphate + H2O = beta-D-fructose 6-phosphate + phosphate. It carries out the reaction D-sedoheptulose 1,7-bisphosphate + H2O = D-sedoheptulose 7-phosphate + phosphate. Its pathway is carbohydrate biosynthesis; Calvin cycle. In terms of biological role, catalyzes the hydrolysis of fructose 1,6-bisphosphate (Fru 1,6-P2) and sedoheptulose 1,7-bisphosphate (Sed 1,7-P2) to fructose 6-phosphate and sedoheptulose 7-phosphate, respectively. In Synechocystis sp. (strain ATCC 27184 / PCC 6803 / Kazusa), this protein is D-fructose 1,6-bisphosphatase class 2/sedoheptulose 1,7-bisphosphatase.